The sequence spans 641 residues: UPF0329 protein ECU11_0030 (641 aa).

A compositionally biased stretch (basic and acidic residues) spans 358–387 (RQRKREEETERSVKELVGDEEKAKSKEEKA). The segment at 358-444 (RQRKREEETE…KGGKKKSKGG (87 aa)) is disordered. The span at 435 to 444 (KGGKKKSKGG) shows a compositional bias: basic residues.

The protein belongs to the UPF0329 family.

This Encephalitozoon cuniculi (strain GB-M1) (Microsporidian parasite) protein is UPF0329 protein ECU11_0030.